The primary structure comprises 669 residues: Alpha-1,4-glucan:maltose-1-phosphate maltosyltransferase 2 (669 aa).

The alpha-maltose 1-phosphate site is built by K255, Q315, and D350. Residue D385 is the Nucleophile of the active site. Residue N386 coordinates alpha-maltose 1-phosphate. The active-site Proton donor is the E414. K525 to Y526 provides a ligand contact to alpha-maltose 1-phosphate.

This sequence belongs to the glycosyl hydrolase 13 family. GlgE subfamily. Homodimer.

It carries out the reaction alpha-maltose 1-phosphate + [(1-&gt;4)-alpha-D-glucosyl](n) = [(1-&gt;4)-alpha-D-glucosyl](n+2) + phosphate. Functionally, maltosyltransferase that uses maltose 1-phosphate (M1P) as the sugar donor to elongate linear or branched alpha-(1-&gt;4)-glucans. Maltooligosaccharides with a degree of polymerization (DP) superior or equal to 4 are efficient acceptors, with DP6 being optimal in the GlgE-catalyzed polymerization with M1P. Is probably involved in a branched alpha-glucan biosynthetic pathway from trehalose, together with TreS, Mak and GlgB. The protein is Alpha-1,4-glucan:maltose-1-phosphate maltosyltransferase 2 (glgE2) of Streptomyces coelicolor (strain ATCC BAA-471 / A3(2) / M145).